A 420-amino-acid polypeptide reads, in one-letter code: Sodium/proton antiporter 2 (420 aa).

The next 11 helical transmembrane spans lie at 25–45, 60–80, 94–114, 136–156, 173–193, 221–241, 242–262, 285–305, 321–341, 363–383, and 400–420; these read IALL…SVEI, IVFY…HQGF, ILLW…DNLT, LGAV…IGDV, IKNL…LMSL, LVFG…SLTG, LPPY…TDVI, GALF…AGIL, LIAS…LVAA, FCAG…VIFM, and FAFA…NFPL.

Belongs to the NhaD Na(+)/H(+) (TC 2.A.62) antiporter family.

The protein resides in the membrane. Na(+)/H(+) antiporter that extrudes sodium in exchange for external protons. The chain is Sodium/proton antiporter 2 from Arabidopsis thaliana (Mouse-ear cress).